The primary structure comprises 439 residues: MSIDINWDTITGGTEGSARAEKIRAFIHDRFQQITLPRFIRSVHVHSFDFGSVPPEIEIKDICDPLPDFYEDDEDYPDEEGDEAENEAEDATPGAGDKLRDSSNPSNRPSRDSQSRERGRGAEGPVGRSIDHNQLRPSQPPARPSTKRSSLAPNELGSPFFPGALTPGIPGGTSNMNYFHLPLSAGLSGAATPLAAVAGAQLHSWLDNPHRPSTPTNMRLRHAASVNSLTLTPQSHPDPTSRPSSRHQHDEGKRQSFAGSDDGASPHGYTRTPSASPHRMHEKSPEDIQVVTHVQYSGNIKMSLTAEILLDYPMPSFVGIPLKLNITGLTFDGVAILAYIKKRAHFCFLSPDDADALVGSDIGFNGLQTDAQGQNPRPVQRPKIGGLLEHIKVESEIGGQGSGKQVLKNVGKVESFVLEQVRRIFEDEFVYPSFWTFLV.

The SMP-LTD domain maps to 1–439; it reads MSIDINWDTI…VYPSFWTFLV (439 aa). Disordered regions lie at residues 65-165 and 229-284; these read PLPD…PGAL and LTLT…HEKS. Residues 69 to 90 show a composition bias toward acidic residues; that stretch reads FYEDDEDYPDEEGDEAENEAED. Over residues 109 to 121 the composition is skewed to basic and acidic residues; that stretch reads PSRDSQSRERGRG. Residues 229–243 are compositionally biased toward polar residues; it reads LTLTPQSHPDPTSRP.

Belongs to the MDM12 family. In terms of assembly, component of the ER-mitochondria encounter structure (ERMES) or MDM complex, composed of MMM1, MDM10, mdm12 and MDM34. An MMM1 homodimer associates with one molecule of mdm12 on each side in a pairwise head-to-tail manner, and the SMP-LTD domains of MMM1 and mdm12 generate a continuous hydrophobic tunnel for phospholipid trafficking.

It is found in the mitochondrion outer membrane. The protein localises to the endoplasmic reticulum membrane. Its function is as follows. Component of the ERMES/MDM complex, which serves as a molecular tether to connect the endoplasmic reticulum (ER) and mitochondria. Components of this complex are involved in the control of mitochondrial shape and protein biogenesis, and function in nonvesicular lipid trafficking between the ER and mitochondria. mdm12 is required for the interaction of the ER-resident membrane protein MMM1 and the outer mitochondrial membrane-resident beta-barrel protein MDM10. The mdm12-MMM1 subcomplex functions in the major beta-barrel assembly pathway that is responsible for biogenesis of all mitochondrial outer membrane beta-barrel proteins, and acts in a late step after the SAM complex. The MDM10-mdm12-MMM1 subcomplex further acts in the TOM40-specific pathway after the action of the mdm12-MMM1 complex. Essential for establishing and maintaining the structure of mitochondria and maintenance of mtDNA nucleoids. This is Mitochondrial distribution and morphology protein 12 from Pyrenophora tritici-repentis (strain Pt-1C-BFP) (Wheat tan spot fungus).